A 288-amino-acid polypeptide reads, in one-letter code: Ribonuclease HIII (288 aa).

In terms of domain architecture, RNase H type-2 spans 76 to 288; sequence YSAIGSDEVG…KNITKQFIKN (213 aa). Residues Asp-82, Glu-83, and Asp-185 each contribute to the a divalent metal cation site.

It belongs to the RNase HII family. RnhC subfamily. It depends on Mn(2+) as a cofactor. Mg(2+) is required as a cofactor.

The protein localises to the cytoplasm. It catalyses the reaction Endonucleolytic cleavage to 5'-phosphomonoester.. Its function is as follows. Endonuclease that specifically degrades the RNA of RNA-DNA hybrids. This is Ribonuclease HIII from Phytoplasma mali (strain AT).